The sequence spans 380 residues: MKNFVFTSESVSEGHPDKIADQISDAVLDEILKHDPNGRVACETFVTTGLVLVGGEITTNTYVDIEQVVRNKIQEIGYNNPNYGFDGSCCAVISSIIKQSPDIAMGIDNENEEEIGAGDQGMVFGYACNETKSLMPAPIYYAHLLMKRQAYLRKQNILSWLRPDAKSQVTLRYENNKPIVIDSVVLSTQHHPEIQQKDLIEAVIEEIIKPTLPTNLLHKDTKYLINPTGRFVIGGPVADCGLTGRKIIVDSYGGMAKHGGGCFSGKDPTKIDRSAAYMARYIAKNIVGAGLADRCEIQISYAIGVADPVSVYAETFGTSKLSNEQTTKLITEHFDMRPGKIIKNLKLHTQCYQKTATYGHFGREDENFTWEQLDKVDIFK.

Residue histidine 15 participates in ATP binding. Aspartate 17 lines the Mg(2+) pocket. A K(+)-binding site is contributed by glutamate 43. Residues glutamate 56 and glutamine 99 each contribute to the L-methionine site. Residues 99–109 (QSPDIAMGIDN) are flexible loop. Residues 164 to 166 (DAK), 230 to 231 (RF), aspartate 239, 245 to 246 (RK), and lysine 266 contribute to the ATP site. Aspartate 239 serves as a coordination point for L-methionine. Lysine 270 provides a ligand contact to L-methionine.

Belongs to the AdoMet synthase family. As to quaternary structure, homotetramer; dimer of dimers. Requires Mg(2+) as cofactor. K(+) serves as cofactor.

It localises to the cytoplasm. It catalyses the reaction L-methionine + ATP + H2O = S-adenosyl-L-methionine + phosphate + diphosphate. The protein operates within amino-acid biosynthesis; S-adenosyl-L-methionine biosynthesis; S-adenosyl-L-methionine from L-methionine: step 1/1. Its function is as follows. Catalyzes the formation of S-adenosylmethionine (AdoMet) from methionine and ATP. The overall synthetic reaction is composed of two sequential steps, AdoMet formation and the subsequent tripolyphosphate hydrolysis which occurs prior to release of AdoMet from the enzyme. In Rickettsia prowazekii (strain Madrid E), this protein is S-adenosylmethionine synthase.